The sequence spans 443 residues: Glutamate-1-semialdehyde 2,1-aminomutase (443 aa).

Lys281 carries the post-translational modification N6-(pyridoxal phosphate)lysine.

It belongs to the class-III pyridoxal-phosphate-dependent aminotransferase family. HemL subfamily. As to quaternary structure, homodimer. Requires pyridoxal 5'-phosphate as cofactor.

The protein resides in the cytoplasm. The enzyme catalyses (S)-4-amino-5-oxopentanoate = 5-aminolevulinate. It functions in the pathway porphyrin-containing compound metabolism; protoporphyrin-IX biosynthesis; 5-aminolevulinate from L-glutamyl-tRNA(Glu): step 2/2. The polypeptide is Glutamate-1-semialdehyde 2,1-aminomutase (Leptospira interrogans serogroup Icterohaemorrhagiae serovar Lai (strain 56601)).